The following is a 256-amino-acid chain: MSSGERVAKVVLVDIEGTTTSISFVHDVLFPYAKQNVEKFLRDFWKEDDIKHIVQDLKQVPKFADYKALLSAPPTEVDVELIAGFVRYLIDQDLKVTPMKTLQGLIWAQGYANGELKGHVYEDVPAAFEAWRAAGLRIAVYSSGSVAAQKLIFGHSLAGNLQPHLSAYFDTHVGHKQEQQSYENIAQQLKEDPKQILFLTDIPGEAAAARSAGLQAIILQRPGNAGLADDQKASFELIPDFKPLHNLKLPINKSQA.

Asp-14 and Glu-16 together coordinate Mg(2+). Substrate contacts are provided by residues 142-143 (SS) and Lys-176. Residue Asp-201 coordinates Mg(2+).

It belongs to the HAD-like hydrolase superfamily. MasA/MtnC family. In terms of assembly, monomer. The cofactor is Mg(2+).

Its subcellular location is the cytoplasm. The protein resides in the nucleus. It catalyses the reaction 5-methylsulfanyl-2,3-dioxopentyl phosphate + H2O = 1,2-dihydroxy-5-(methylsulfanyl)pent-1-en-3-one + phosphate. It participates in amino-acid biosynthesis; L-methionine biosynthesis via salvage pathway; L-methionine from S-methyl-5-thio-alpha-D-ribose 1-phosphate: step 3/6. The protein operates within amino-acid biosynthesis; L-methionine biosynthesis via salvage pathway; L-methionine from S-methyl-5-thio-alpha-D-ribose 1-phosphate: step 4/6. Functionally, bifunctional enzyme that catalyzes the enolization of 2,3-diketo-5-methylthiopentyl-1-phosphate (DK-MTP-1-P) into the intermediate 2-hydroxy-3-keto-5-methylthiopentenyl-1-phosphate (HK-MTPenyl-1-P), which is then dephosphorylated to form the acireductone 1,2-dihydroxy-3-keto-5-methylthiopentene (DHK-MTPene). The sequence is that of Enolase-phosphatase E1 from Drosophila simulans (Fruit fly).